A 164-amino-acid chain; its full sequence is Small ribosomal subunit protein uS5 (164 aa).

The 64-residue stretch at 10–73 (LEERVVAVNR…DDAKKNLIEV (64 aa)) folds into the S5 DRBM domain.

This sequence belongs to the universal ribosomal protein uS5 family. As to quaternary structure, part of the 30S ribosomal subunit. Contacts proteins S4 and S8.

In terms of biological role, with S4 and S12 plays an important role in translational accuracy. Functionally, located at the back of the 30S subunit body where it stabilizes the conformation of the head with respect to the body. This is Small ribosomal subunit protein uS5 from Streptococcus pneumoniae serotype 2 (strain D39 / NCTC 7466).